The primary structure comprises 336 residues: MIEADRIISAIAKSDDEAVDRAIRPKLLQDYVGQPQVRSQMEIFIQAAKLRQDALDHLLIFGPPGLGKTTLANIVANEMGVNIRTTSGPVLEKAGDLAAMLTNLEPHDVLFIDEIHRLSPAIEEVLYPAMEDYQLDIMIGEGPAARSIKLDLPPFTLIGATTRAGSLTSPLRDRFGIVQRLEFYSIEDLTSIVMRSAACLNLEISDDASHEVARRSRGTPRIANRLLRRVRDYADVKNNGMITQGIAKAALAMLDIDQAGFDYLDRKLLSSIIERFDGGPVGLDNLAAAIGEERDTIEDVLEPYLIQQGFLQRTPRGRIATSQTYRHFGLAKLADK.

A large ATPase domain (RuvB-L) region spans residues 4 to 184 (ADRIISAIAK…FGIVQRLEFY (181 aa)). ATP-binding positions include I23, R24, G65, K68, T69, T70, 131–133 (EDY), R174, Y184, and R221. T69 is a binding site for Mg(2+). The small ATPAse domain (RuvB-S) stretch occupies residues 185-255 (SIEDLTSIVM…IAKAALAMLD (71 aa)). The head domain (RuvB-H) stretch occupies residues 258–336 (QAGFDYLDRK…HFGLAKLADK (79 aa)). Residues R294, R313, and R318 each coordinate DNA.

This sequence belongs to the RuvB family. In terms of assembly, homohexamer. Forms an RuvA(8)-RuvB(12)-Holliday junction (HJ) complex. HJ DNA is sandwiched between 2 RuvA tetramers; dsDNA enters through RuvA and exits via RuvB. An RuvB hexamer assembles on each DNA strand where it exits the tetramer. Each RuvB hexamer is contacted by two RuvA subunits (via domain III) on 2 adjacent RuvB subunits; this complex drives branch migration. In the full resolvosome a probable DNA-RuvA(4)-RuvB(12)-RuvC(2) complex forms which resolves the HJ.

It is found in the cytoplasm. It carries out the reaction ATP + H2O = ADP + phosphate + H(+). Functionally, the RuvA-RuvB-RuvC complex processes Holliday junction (HJ) DNA during genetic recombination and DNA repair, while the RuvA-RuvB complex plays an important role in the rescue of blocked DNA replication forks via replication fork reversal (RFR). RuvA specifically binds to HJ cruciform DNA, conferring on it an open structure. The RuvB hexamer acts as an ATP-dependent pump, pulling dsDNA into and through the RuvAB complex. RuvB forms 2 homohexamers on either side of HJ DNA bound by 1 or 2 RuvA tetramers; 4 subunits per hexamer contact DNA at a time. Coordinated motions by a converter formed by DNA-disengaged RuvB subunits stimulates ATP hydrolysis and nucleotide exchange. Immobilization of the converter enables RuvB to convert the ATP-contained energy into a lever motion, pulling 2 nucleotides of DNA out of the RuvA tetramer per ATP hydrolyzed, thus driving DNA branch migration. The RuvB motors rotate together with the DNA substrate, which together with the progressing nucleotide cycle form the mechanistic basis for DNA recombination by continuous HJ branch migration. Branch migration allows RuvC to scan DNA until it finds its consensus sequence, where it cleaves and resolves cruciform DNA. The polypeptide is Holliday junction branch migration complex subunit RuvB (Actinobacillus succinogenes (strain ATCC 55618 / DSM 22257 / CCUG 43843 / 130Z)).